The chain runs to 64 residues: Leader peptide SpeFL (64 aa).

The short motif at histidine 32–histidine 38 is the Ornithine recognition loop element. Arginine 35 serves as a coordination point for L-ornithine.

This sequence belongs to the speF operon leader peptide family. As to quaternary structure, binds ornithine in stalled 70S ribosomes, blocking the upper two-thirds of the exit tunnel. Contacts 23S rRNA and ribosomal proteins L4 and L22.

In terms of biological role, a small protein (arrest peptide) encoded upstream of inducible ornithine carboxylase gene (speF) that controls expression of downstream genes (usually speF and potE) by transcriptional and translational attenuation. The polypeptide is Leader peptide SpeFL (Haemophilus influenzae (strain ATCC 51907 / DSM 11121 / KW20 / Rd)).